The following is a 286-amino-acid chain: Shikimate dehydrogenase (NADP(+)) (286 aa).

Residues 19-21 and threonine 66 contribute to the shikimate site; that span reads SLS. Lysine 70 (proton acceptor) is an active-site residue. Positions 91 and 107 each coordinate shikimate. Residues 129-133 and leucine 229 each bind NADP(+); that span reads GSGGA. Tyrosine 231 is a binding site for shikimate. Glycine 252 is a binding site for NADP(+).

It belongs to the shikimate dehydrogenase family. As to quaternary structure, homodimer.

The catalysed reaction is shikimate + NADP(+) = 3-dehydroshikimate + NADPH + H(+). Its pathway is metabolic intermediate biosynthesis; chorismate biosynthesis; chorismate from D-erythrose 4-phosphate and phosphoenolpyruvate: step 4/7. Its function is as follows. Involved in the biosynthesis of the chorismate, which leads to the biosynthesis of aromatic amino acids. Catalyzes the reversible NADPH linked reduction of 3-dehydroshikimate (DHSA) to yield shikimate (SA). The chain is Shikimate dehydrogenase (NADP(+)) from Prochlorococcus marinus (strain AS9601).